We begin with the raw amino-acid sequence, 295 residues long: UDP-N-acetylenolpyruvoylglucosamine reductase (295 aa).

In terms of domain architecture, FAD-binding PCMH-type spans 24-188 (KVGGNAEIFF…LKVIFKINKG (165 aa)). Residue R168 is part of the active site. S217 serves as the catalytic Proton donor. E287 is a catalytic residue.

It belongs to the MurB family. FAD is required as a cofactor.

The protein resides in the cytoplasm. It catalyses the reaction UDP-N-acetyl-alpha-D-muramate + NADP(+) = UDP-N-acetyl-3-O-(1-carboxyvinyl)-alpha-D-glucosamine + NADPH + H(+). It participates in cell wall biogenesis; peptidoglycan biosynthesis. Its function is as follows. Cell wall formation. The sequence is that of UDP-N-acetylenolpyruvoylglucosamine reductase from Rickettsia rickettsii (strain Iowa).